The following is a 921-amino-acid chain: Isoleucine--tRNA ligase (921 aa).

A 'HIGH' region motif is present at residues 57-67; it reads PYANGNIHVGT. Glutamate 551 is an L-isoleucyl-5'-AMP binding site. The 'KMSKS' region signature appears at 592 to 596; it reads KMSKS. Residue lysine 595 participates in ATP binding. Residues cysteine 885, cysteine 888, cysteine 905, and cysteine 908 each coordinate Zn(2+).

This sequence belongs to the class-I aminoacyl-tRNA synthetase family. IleS type 1 subfamily. Monomer. It depends on Zn(2+) as a cofactor.

It localises to the cytoplasm. It carries out the reaction tRNA(Ile) + L-isoleucine + ATP = L-isoleucyl-tRNA(Ile) + AMP + diphosphate. In terms of biological role, catalyzes the attachment of isoleucine to tRNA(Ile). As IleRS can inadvertently accommodate and process structurally similar amino acids such as valine, to avoid such errors it has two additional distinct tRNA(Ile)-dependent editing activities. One activity is designated as 'pretransfer' editing and involves the hydrolysis of activated Val-AMP. The other activity is designated 'posttransfer' editing and involves deacylation of mischarged Val-tRNA(Ile). The chain is Isoleucine--tRNA ligase from Kosmotoga olearia (strain ATCC BAA-1733 / DSM 21960 / TBF 19.5.1).